Reading from the N-terminus, the 624-residue chain is Multicopper oxidase elcG (624 aa).

The N-terminal stretch at 1–18 is a signal peptide; it reads MACNILNFLTGLLSLSST. Plastocyanin-like domains are found at residues 48 to 160 and 216 to 373; these read PGRA…IERG and CMDA…TIRI. N65 carries an N-linked (GlcNAc...) asparagine glycan. Cu cation-binding residues include H96, H98, H140, and H142. N-linked (GlcNAc...) asparagine glycans are attached at residues N271, N296, and N464. A Plastocyanin-like 3 domain is found at 474 to 603; that stretch reads FLFQDPSQIE…GGMGVVILDG (130 aa). Residues H511, H514, H516, H585, C586, H587, and H591 each contribute to the Cu cation site.

The protein belongs to the multicopper oxidase family.

The protein operates within secondary metabolite biosynthesis. Multicopper oxidase; part of the gene cluster that mediates the biosynthesis of elsinochrome C, a perelyenequinone phytotoxin structurally similar to cercosporin. The first step of elsinochrome C biosynthesis is performed by the polyketide synthase elcA which catalyzes the formation of nor-toralactone. The starter unit acyltransferase (SAT) domain of elcA initiates polyketide extension by the selective utilization of acetyl-CoA, which is elongated to the heptaketide in the beta-ketoacyl synthase (KS) domain by successive condensations with six malonyl units introduced by the malonyl acyltransferase (MAT) domain. The product template (PT) domain catalyzes C4-C9 and C2-C11 aldol cyclizations and dehydrations to a trihydroxynaphthalene, which is thought to be delivered to the thioesterase (TE) domain for product release. The bifunctional enzyme elcB then methylates nor-toralactone to toralactone before conducting an unusual oxidative aromatic ring opening. The next step in perylenequinone biosynthesis is an O-methylation at the nascent OH-6 of the elcB product performed by the O-methyltransferase elcD. The oxidative coupling of the two monomeric naphthol units in perylenequinone biosynthesis is catalyzed by the FAD-dependent monooxygenase elcE and the multicopper oxidase elcG. ElcG might catalyze the first intermolecular coupling in a regio- and stereo-selective manner via a phenol radical coupling mechanism and the elcE could forge the second C-C bond intramolecularly via a hydride transfer mechanism. The fasciclin domain-containing protein elcF might also play a role duting this step. The last piece of the puzzle in the biosynthesis of elsinochrome C is the additional annulation by enolate coupling to afford the dihydrobenzo(ghi)perylenequinone system, catalyzed by the FAD-dependent monooxygenase elcH. The protein is Multicopper oxidase elcG of Phaeosphaeria nodorum (strain SN15 / ATCC MYA-4574 / FGSC 10173) (Glume blotch fungus).